The primary structure comprises 79 residues: Putative membrane protein insertion efficiency factor (79 aa).

Belongs to the UPF0161 family.

Its subcellular location is the cell inner membrane. Functionally, could be involved in insertion of integral membrane proteins into the membrane. The protein is Putative membrane protein insertion efficiency factor of Prochlorococcus marinus (strain NATL1A).